The primary structure comprises 276 residues: Shikimate dehydrogenase (NADP(+)) (276 aa).

Residues 18–20 (SRS) and threonine 65 contribute to the shikimate site. Lysine 69 (proton acceptor) is an active-site residue. Shikimate-binding residues include asparagine 90 and aspartate 106. NADP(+)-binding positions include 132–136 (GAGGA) and isoleucine 221. Tyrosine 223 lines the shikimate pocket. Residue glycine 244 coordinates NADP(+).

Belongs to the shikimate dehydrogenase family. Homodimer.

It catalyses the reaction shikimate + NADP(+) = 3-dehydroshikimate + NADPH + H(+). The protein operates within metabolic intermediate biosynthesis; chorismate biosynthesis; chorismate from D-erythrose 4-phosphate and phosphoenolpyruvate: step 4/7. In terms of biological role, involved in the biosynthesis of the chorismate, which leads to the biosynthesis of aromatic amino acids. Catalyzes the reversible NADPH linked reduction of 3-dehydroshikimate (DHSA) to yield shikimate (SA). The polypeptide is Shikimate dehydrogenase (NADP(+)) (Paramagnetospirillum magneticum (strain ATCC 700264 / AMB-1) (Magnetospirillum magneticum)).